The chain runs to 269 residues: Pertussis toxin subunit 1 (269 aa).

Residues 1-34 (MRCTRAIRQTARTGWLTWLAILAVTAPVTSPAWA) form the signal peptide. Residue W60 participates in NAD(+) binding. Residues H69 and E163 contribute to the active site. Residues C75 and C235 are joined by a disulfide bond.

Belongs to the bacterial exotoxin subunit A family. Pertussis toxin contains five different chains, S1-S5. They are organized into 2 functional subunits: A, composed of S1 (which is toxic) and B, containing S2, S3, S5, and two copies of S4 (B binds to the membrane receptors). Dimers of S2-S4 and S3-S4 are held together by S5.

Its subcellular location is the secreted. S1 is an NAD-dependent ADP-ribosyltransferase, which plays a crucial role in the pathogenesis of B.pertussis causing disruption of normal host cellular regulation. It catalyzes the ADP-ribosylation of a cysteine in the alpha subunit of host heterotrimeric G proteins. In the absence of G proteins it also catalyzes the cleavage of NAD(+) into ADP-ribose and nicotinamide. It irreversibly uncouples the G-alpha GTP-binding proteins from their membrane receptors. The chain is Pertussis toxin subunit 1 (ptxA) from Bordetella pertussis (strain Tohama I / ATCC BAA-589 / NCTC 13251).